A 292-amino-acid chain; its full sequence is 4-hydroxy-tetrahydrodipicolinate synthase (292 aa).

Thr45 is a binding site for pyruvate. Tyr133 functions as the Proton donor/acceptor in the catalytic mechanism. The Schiff-base intermediate with substrate role is filled by Lys161. Ile203 provides a ligand contact to pyruvate.

It belongs to the DapA family. In terms of assembly, homotetramer; dimer of dimers.

It localises to the cytoplasm. It carries out the reaction L-aspartate 4-semialdehyde + pyruvate = (2S,4S)-4-hydroxy-2,3,4,5-tetrahydrodipicolinate + H2O + H(+). It participates in amino-acid biosynthesis; L-lysine biosynthesis via DAP pathway; (S)-tetrahydrodipicolinate from L-aspartate: step 3/4. Its function is as follows. Catalyzes the condensation of (S)-aspartate-beta-semialdehyde [(S)-ASA] and pyruvate to 4-hydroxy-tetrahydrodipicolinate (HTPA). This chain is 4-hydroxy-tetrahydrodipicolinate synthase, found in Herminiimonas arsenicoxydans.